Consider the following 72-residue polypeptide: uncharacterized protein (72 aa).

The tract at residues 52-72 (KGGRQRDEAVGVEELCKQHKE) is disordered. Basic and acidic residues predominate over residues 55–72 (RQRDEAVGVEELCKQHKE).

Belongs to the YiiE family.

This is an uncharacterized protein from Escherichia coli O6:H1 (strain CFT073 / ATCC 700928 / UPEC).